A 229-amino-acid polypeptide reads, in one-letter code: Extracellular endonuclease (229 aa).

An N-terminal signal peptide occupies residues 1-19 (MSARFIAVFCLFFTVTAHA). Positions 69 to 95 (RADASNGNTSSRPGRSGISASAGKPVG) are disordered. Over residues 71 to 81 (DASNGNTSSRP) the composition is skewed to polar residues.

It belongs to the EndA/NucM nuclease family.

It is found in the secreted. This chain is Extracellular endonuclease (endX), found in Pseudomonas fluorescens biotype A.